The following is a 345-amino-acid chain: Phosphoribosylformylglycinamidine cyclo-ligase (345 aa).

This sequence belongs to the AIR synthase family.

The protein localises to the cytoplasm. The enzyme catalyses 2-formamido-N(1)-(5-O-phospho-beta-D-ribosyl)acetamidine + ATP = 5-amino-1-(5-phospho-beta-D-ribosyl)imidazole + ADP + phosphate + H(+). It functions in the pathway purine metabolism; IMP biosynthesis via de novo pathway; 5-amino-1-(5-phospho-D-ribosyl)imidazole from N(2)-formyl-N(1)-(5-phospho-D-ribosyl)glycinamide: step 2/2. The chain is Phosphoribosylformylglycinamidine cyclo-ligase from Enterobacter sp. (strain 638).